The sequence spans 287 residues: Ribonuclease Z (287 aa).

Zn(2+)-binding residues include His-64, His-66, Asp-68, His-69, His-124, Asp-191, and His-250. Asp-68 (proton acceptor) is an active-site residue.

This sequence belongs to the RNase Z family. Homodimer. It depends on Zn(2+) as a cofactor.

It carries out the reaction Endonucleolytic cleavage of RNA, removing extra 3' nucleotides from tRNA precursor, generating 3' termini of tRNAs. A 3'-hydroxy group is left at the tRNA terminus and a 5'-phosphoryl group is left at the trailer molecule.. In terms of biological role, zinc phosphodiesterase, which displays some tRNA 3'-processing endonuclease activity. Probably involved in tRNA maturation, by removing a 3'-trailer from precursor tRNA. This is Ribonuclease Z from Pyrobaculum calidifontis (strain DSM 21063 / JCM 11548 / VA1).